The following is a 7839-amino-acid chain: Nonribosomal peptide synthetase GRA1 (7839 aa).

Polar residues predominate over residues 1 to 23 (MALLNGKSTLPNGHNSSIESPNG). Residues 1–26 (MALLNGKSTLPNGHNSSIESPNGYTE) are disordered. Residues 264 to 650 (LASPNSCAVH…LGRIDDQVKI (387 aa)) are adenylation 1. The region spanning 793–866 (SAEALVLRQL…LQAEMSEKKK (74 aa)) is the Carrier 1 domain. Ser-827 carries the post-translational modification O-(pantetheine 4'-phosphoryl)serine. The segment at 916 to 1332 (DIYPASPLQE…ILSPSDVAQI (417 aa)) is condensation 1. Positions 1351 to 1742 (FFTQVKRSPD…QRKDAQLKIR (392 aa)) are adenylation 2. A Carrier 2 domain is found at 1880–1957 (ELETEAERTM…AMSRQATVSD (78 aa)). At Ser-1918 the chain carries O-(pantetheine 4'-phosphoryl)serine. Positions 1997–2413 (DLYPCTPFQE…LISPSDMETI (417 aa)) are condensation 2. Positions 2432–2828 (FDRRLSQKHS…GRRDTQLKIR (397 aa)) are adenylation 3. The 78-residue stretch at 2963-3040 (IPTTQMEWNL…DLAQAIVLDT (78 aa)) folds into the Carrier 3 domain. The residue at position 3001 (Ser-3001) is an O-(pantetheine 4'-phosphoryl)serine. The tract at residues 3084 to 3496 (DIYPCTPLQD…QVDLISDSDH (413 aa)) is condensation 3. The segment at 3520-3923 (RLAVSNPDAE…GRRDSQVKLR (404 aa)) is adenylation 4. Positions 4057-4134 (RPLTEREKDL…DMAAMTTSLS (78 aa)) constitute a Carrier 4 domain. Residue Ser-4095 is modified to O-(pantetheine 4'-phosphoryl)serine. The condensation 4 stretch occupies residues 4234–4569 (NLEEFVGRQS…MMNPDDAEEI (336 aa)). Positions 4591-4982 (HSKGCPDRIA…VSRKDTQVKF (392 aa)) are adenylation 5. The Carrier 5 domain occupies 5113–5189 (ALSSDEESQL…DMALCMTSAQ (77 aa)). At Ser-5150 the chain carries O-(pantetheine 4'-phosphoryl)serine. The condensation 5 stretch occupies residues 5224–5653 (EDIYPCSALQ…VSPSDQAEIL (430 aa)). The adenylation 6 stretch occupies residues 5671-6069 (FESRARLQPS…GRRDTQVKLR (399 aa)). Residues 6207 to 6282 (FPSSLAEQQM…HMAAIATTFT (76 aa)) enclose the Carrier 6 domain. At Ser-6243 the chain carries O-(pantetheine 4'-phosphoryl)serine. The condensation 6 stretch occupies residues 6321-6730 (QDIYPCSALQ…RLADMDLTGP (410 aa)). An adenylation 7 region spans residues 6756-7147 (EQRVKSQPDS…LGRKDSQIKL (392 aa)). The Carrier 7 domain occupies 7290–7366 (KAATPNEKTL…DLARVSRQSI (77 aa)). O-(pantetheine 4'-phosphoryl)serine is present on Ser-7327. The tract at residues 7404–7704 (HDIYPCTQVQ…LDYAKKRASS (301 aa)) is condensation7.

It belongs to the NRP synthetase family.

The protein operates within mycotoxin biosynthesis. Its function is as follows. Nonribosomal peptide synthetase; part of the gene cluster that mediates the biosynthesis of gramillins A and B, bicyclic lipopeptides that induce cell death in maize leaves but not in wheat leaves. The nonribosomal peptide synthetase GRA1 incorporates respectively a glutamic adic (Glu), a leucine (Leu), a serine (Ser), a hydroxyglutamine (HOGln), a 2-amino decanoic acid, and 2 cysteins (CysB and CysA). The biosynthesis of 2-amino decanoic acid incorporated in gramillins could be initiated by a fatty acid synthase composed of the alpha and beta subunits FGSG_00036 and FGSG_11656. The cytochrome P450 monooxygenase FGSG_15680 could hydroxylate the fatty acid chain. Subsequent oxidation to the ketone by the oxidoreductase FGSG_00048 and transamination by aminotransferase FGSG_00049 could form 2-amino-decanoic acid. On the other hand, FGSG_15680 could also be responsible for the HO-modified glutamine at the gamma-position. Whether hydroxylation occurs on the fully assembled product or on the Gln residue prior to assembly into the gramillins requires further proof. The thioredoxin FGSG_00043 could also be required for the disulfide-bond formation between CysA and CysB. The specific involvement of the remaining proteins from the cluster is more difficult to discern, but could have broader regulatory (FGSG_00040 and FGSG_11657) or enzymatic functions (FGSG_00044 and FGSG_00045). The final C-domain of GRA1 does not possess the expected sequence of a termination CT domain, often implicated in macrocyclization and release of a cyclopeptidein fungal NRPs; and the thioesterase FGSG_00047 may act in concert with the terminal C-domain of GRA1 to catalyze the formation of the macrocyclic anhydride and release of the products. This chain is Nonribosomal peptide synthetase GRA1, found in Gibberella zeae (strain ATCC MYA-4620 / CBS 123657 / FGSC 9075 / NRRL 31084 / PH-1) (Wheat head blight fungus).